Reading from the N-terminus, the 305-residue chain is Ornithine carbamoyltransferase, anabolic (305 aa).

Carbamoyl phosphate is bound by residues 53 to 56, glutamine 80, arginine 104, and 131 to 134; these read STRT and HPCQ. Residues asparagine 162, aspartate 219, and 223–224 contribute to the L-ornithine site; that span reads SM. Residues 259–260 and arginine 287 contribute to the carbamoyl phosphate site; that span reads CL.

The protein belongs to the aspartate/ornithine carbamoyltransferase superfamily. OTCase family. In terms of assembly, homotrimer.

The protein localises to the cytoplasm. The enzyme catalyses carbamoyl phosphate + L-ornithine = L-citrulline + phosphate + H(+). It participates in amino-acid biosynthesis; L-arginine biosynthesis; L-arginine from L-ornithine and carbamoyl phosphate: step 1/3. Its function is as follows. Reversibly catalyzes the transfer of the carbamoyl group from carbamoyl phosphate (CP) to the N(epsilon) atom of ornithine (ORN) to produce L-citrulline, which is a substrate for argininosuccinate synthetase (ArgG) involved in the final step in arginine biosynthesis. The chain is Ornithine carbamoyltransferase, anabolic from Pseudomonas aeruginosa (strain ATCC 15692 / DSM 22644 / CIP 104116 / JCM 14847 / LMG 12228 / 1C / PRS 101 / PAO1).